The chain runs to 343 residues: Membrane progestin receptor delta (343 aa).

Over 1 to 49 (MLSLKMPQLLRVHQVPRVFWEEGIMSGYRCPTSSALDCVLSSFQMTNET) the chain is Cytoplasmic. The chain crosses the membrane as a helical span at residues 50-70 (VNIWTHFLPTWYFLWRLLALG). Topologically, residues 71–79 (SPGFRADPY) are extracellular. The helical transmembrane segment at 80 to 100 (HLPLLVFLLPACLYPFASCCA) threads the bilayer. Topologically, residues 101 to 112 (HTFSSMSPRARH) are cytoplasmic. The chain crosses the membrane as a helical span at residues 113-133 (ICYFLDYGALSLYSLGCAFPY). At 134–146 (AAYSMPASWLHSR) the chain is on the extracellular side. The helical transmembrane segment at 147 to 167 (LHQLFVPAAALNSFLCTGLSC) threads the bilayer. Residues 168-216 (YSRFPELEYPGFSKALRTAAFAYPFLFDNLPLFYRLRLCWGGAHSCGRD) are Cytoplasmic-facing. The chain crosses the membrane as a helical span at residues 217 to 237 (ALSSNHGYHLLCALLSGFLFA). The Extracellular segment spans residues 238–257 (ARLPERLAPGRFDYIGHSHQ). The chain crosses the membrane as a helical span at residues 258 to 278 (LFHICAVLGTHFQLEAVLADM). The Cytoplasmic portion of the chain corresponds to 279–291 (GSRRAWLAVQEPT). The helical transmembrane segment at 292–312 (LGLGATVATLSLAVIGNLFII) threads the bilayer. Residues 313–343 (AAFTASLLRMPGPCPLLQGSPLEEGLQAKQQ) lie on the Extracellular side of the membrane.

This sequence belongs to the ADIPOR family. Homodimer.

Its subcellular location is the cell membrane. Its function is as follows. Plasma membrane progesterone (P4) receptor coupled to G proteins. Seems to act through a G(s) mediated pathway. Involved in neurosteroid inhibition of apoptosis. May be involved in regulating rapid P4 signaling in the nervous system. Also binds dehydroepiandrosterone (DHEA), pregnanolone, pregnenolone and allopregnanolone. This is Membrane progestin receptor delta from Mus musculus (Mouse).